The primary structure comprises 138 residues: PTS system sorbose-specific EIIA component (138 aa).

The region spanning 1–125 (MEIILVGHAH…KIKEEFSTSL (125 aa)) is the PTS EIIA type-4 domain. His8 functions as the Tele-phosphohistidine intermediate in the catalytic mechanism. His8 bears the Phosphohistidine; by HPr mark.

It is found in the cytoplasm. The phosphoenolpyruvate-dependent sugar phosphotransferase system (PTS), a major carbohydrate active transport system, catalyzes the phosphorylation of incoming sugar substrates concomitant with their translocation across the cell membrane. The enzyme II SorABCD PTS system is involved in L-sorbose transport. The chain is PTS system sorbose-specific EIIA component from Lacticaseibacillus casei (Lactobacillus casei).